We begin with the raw amino-acid sequence, 132 residues long: uncharacterized protein (132 aa).

This is an uncharacterized protein from Acanthamoeba polyphaga (Amoeba).